Here is a 569-residue protein sequence, read N- to C-terminus: Urease subunit alpha (569 aa).

The region spanning 131 to 569 is the Urease domain; that stretch reads GGIDTHIHFI…LPLAQRYLLL (439 aa). 3 residues coordinate Ni(2+): histidine 136, histidine 138, and lysine 219. Lysine 219 carries the N6-carboxylysine modification. Residue histidine 221 coordinates substrate. Residues histidine 248 and histidine 274 each contribute to the Ni(2+) site. The active-site Proton donor is histidine 322. Position 362 (aspartate 362) interacts with Ni(2+).

It belongs to the metallo-dependent hydrolases superfamily. Urease alpha subunit family. Heterotrimer of UreA (gamma), UreB (beta) and UreC (alpha) subunits. Three heterotrimers associate to form the active enzyme. The cofactor is Ni cation. Post-translationally, carboxylation allows a single lysine to coordinate two nickel ions.

The protein localises to the cytoplasm. It catalyses the reaction urea + 2 H2O + H(+) = hydrogencarbonate + 2 NH4(+). The protein operates within nitrogen metabolism; urea degradation; CO(2) and NH(3) from urea (urease route): step 1/1. This is Urease subunit alpha from Synechococcus sp. (strain CC9605).